Here is a 1755-residue protein sequence, read N- to C-terminus: Transposon Ty1-PR1 Gag-Pol polyprotein (1755 aa).

4 stretches are compositionally biased toward polar residues: residues 1-23 (MESQQLSQHSPISHGSACASVTS), 48-60 (TKANSQQTTTPAS), 71-93 (SPQTAQSHSPQNGPYPQQCMMTQ), and 127-152 (QSQFPQYPSSVGTPLSTPSPESGNTF). 3 disordered regions span residues 1–93 (MESQ…MMTQ), 126–173 (PQSQ…RPPP), and 352–421 (GSRN…SKST). Low complexity predominate over residues 153-165 (TDSSSADSDMTST). Positions 299 to 401 (NNGIHINNKV…NSKSKTARAH (103 aa)) are RNA-binding. Low complexity predominate over residues 402-418 (NVSTSNNSPSTDNDSIS). At S416 the chain carries Phosphoserine. D461 (for protease activity; shared with dimeric partner) is an active-site residue. An integrase-type zinc finger-like region spans residues 583 to 640 (NVHTSESTRKYPYPFIHRMLAHANAQTIRYSLKNNTITYFNESDVDWSSAIDYQCPDC). The region spanning 660–835 (NSYEPFQYLH…AGLDISTLLP (176 aa)) is the Integrase catalytic domain. Positions 671 and 736 each coordinate Mg(2+). 3 disordered regions span residues 956 to 1087 (SKAV…ETEK), 1092 to 1111 (RSPSIDASPPENNSSHNIVP), and 1130 to 1187 (DLPL…DNET). Low complexity predominate over residues 960–969 (SPTDSTPPST). Residues 1005-1015 (STPQISNIEST) show a composition bias toward polar residues. Residues 1038–1053 (ESSHASKSKDFRHSDS) show a composition bias toward basic and acidic residues. 2 stretches are compositionally biased toward polar residues: residues 1054-1082 (YSENETNHTNVPISSTGGTNNKTVPQISD) and 1101-1111 (PENNSSHNIVP). The Bipartite nuclear localization signal motif lies at 1178–1212 (KKRSLEDNETEIKVSRDTWNTKNMRSLEPPRSKKR). In terms of domain architecture, Reverse transcriptase Ty1/copia-type spans 1338–1476 (NNYYITQLDI…DILGLEIKYQ (139 aa)). Mg(2+) is bound by residues D1346, D1427, D1428, D1610, E1652, and D1685. An RNase H Ty1/copia-type domain is found at 1610–1752 (DASYGNQPYY…IKTFKLLTNK (143 aa)).

As to quaternary structure, the capsid protein forms a homotrimer, from which the VLPs are assembled. The protease is a homodimer, whose active site consists of two apposed aspartic acid residues. In terms of processing, initially, virus-like particles (VLPs) are composed of the structural unprocessed proteins Gag and Gag-Pol, and also contain the host initiator methionine tRNA (tRNA(i)-Met) which serves as a primer for minus-strand DNA synthesis, and a dimer of genomic Ty RNA. Processing of the polyproteins occurs within the particle and proceeds by an ordered pathway, called maturation. First, the protease (PR) is released by autocatalytic cleavage of the Gag-Pol polyprotein yielding capsid protein p45 and a Pol-p154 precursor protein. This cleavage is a prerequisite for subsequent processing of Pol-p154 at the remaining sites to release the mature structural and catalytic proteins. Maturation takes place prior to the RT reaction and is required to produce transposition-competent VLPs.

The protein resides in the cytoplasm. Its subcellular location is the nucleus. The catalysed reaction is DNA(n) + a 2'-deoxyribonucleoside 5'-triphosphate = DNA(n+1) + diphosphate. The enzyme catalyses Endonucleolytic cleavage to 5'-phosphomonoester.. Functionally, capsid protein (CA) is the structural component of the virus-like particle (VLP), forming the shell that encapsulates the retrotransposons dimeric RNA genome. The particles are assembled from trimer-clustered units and there are holes in the capsid shells that allow for the diffusion of macromolecules. CA also has nucleocapsid-like chaperone activity, promoting primer tRNA(i)-Met annealing to the multipartite primer-binding site (PBS), dimerization of Ty1 RNA and initiation of reverse transcription. The aspartyl protease (PR) mediates the proteolytic cleavages of the Gag and Gag-Pol polyproteins after assembly of the VLP. In terms of biological role, reverse transcriptase/ribonuclease H (RT) is a multifunctional enzyme that catalyzes the conversion of the retro-elements RNA genome into dsDNA within the VLP. The enzyme displays a DNA polymerase activity that can copy either DNA or RNA templates, and a ribonuclease H (RNase H) activity that cleaves the RNA strand of RNA-DNA heteroduplexes during plus-strand synthesis and hydrolyzes RNA primers. The conversion leads to a linear dsDNA copy of the retrotransposon that includes long terminal repeats (LTRs) at both ends. Its function is as follows. Integrase (IN) targets the VLP to the nucleus, where a subparticle preintegration complex (PIC) containing at least integrase and the newly synthesized dsDNA copy of the retrotransposon must transit the nuclear membrane. Once in the nucleus, integrase performs the integration of the dsDNA into the host genome. In Saccharomyces cerevisiae (strain ATCC 204508 / S288c) (Baker's yeast), this protein is Transposon Ty1-PR1 Gag-Pol polyprotein (TY1B-PR1).